We begin with the raw amino-acid sequence, 265 residues long: Cell division protein DivIB (265 aa).

Topologically, residues 1–30 are cytoplasmic; that stretch reads MKNSKVIKLQDRVPKLKNQQKKKKKNVNHR. The chain crosses the membrane as a helical span at residues 31–51; sequence LILYISILFLLVLFLIYFRSP. At 52–265 the chain is on the extracellular side; the sequence is LSNIKKISVF…NRMIVFNTLS (214 aa). Residues 53 to 121 form the POTRA domain; that stretch reads SNIKKISVFG…NKIDVHIEEY (69 aa).

Belongs to the FtsQ/DivIB family. DivIB subfamily.

The protein resides in the cell membrane. Functionally, cell division protein that may be involved in stabilizing or promoting the assembly of the division complex. The polypeptide is Cell division protein DivIB (Bacillus anthracis).